Consider the following 480-residue polypeptide: Glutamyl-tRNA(Gln) amidotransferase subunit A (480 aa).

Active-site charge relay system residues include lysine 79 and serine 154. Residues 133–156 (NENSAYGPVRNPRDKSRVPGGSSG) form a disordered region. The active-site Acyl-ester intermediate is the serine 178.

It belongs to the amidase family. GatA subfamily. As to quaternary structure, heterotrimer of A, B and C subunits.

The catalysed reaction is L-glutamyl-tRNA(Gln) + L-glutamine + ATP + H2O = L-glutaminyl-tRNA(Gln) + L-glutamate + ADP + phosphate + H(+). Its function is as follows. Allows the formation of correctly charged Gln-tRNA(Gln) through the transamidation of misacylated Glu-tRNA(Gln) in organisms which lack glutaminyl-tRNA synthetase. The reaction takes place in the presence of glutamine and ATP through an activated gamma-phospho-Glu-tRNA(Gln). In Koribacter versatilis (strain Ellin345), this protein is Glutamyl-tRNA(Gln) amidotransferase subunit A.